The chain runs to 306 residues: MAGVGLAAVPAWVPCRRWGLAAVTFGFHHGLSTLLARKTERAPQWLRACRHKTSISFLSRPDLPNLAYKRLKGKSPGIIFIPGYISNMNGTKALAIEEFCKSLGHAYIRFDYSGVGNSDGNLEECTVGKWRKDVLSIIDDLAEGPQILVGSSLGGWLMFHAAIARPQKVVALVGVATAVDGLVTQFNQLPIETKKEIEMKGVWPMPSKYSEEGVYRIQYSVIKEAEHHCLLHSPIPVKCPVRLLHGMKDDIVPWHTSVQVADRVVSTDVDVILRKNSDHRMKEKADIQLLVYTIDDLIDKLSTIVH.

A mitochondrion-targeting transit peptide spans 1–52 (MAGVGLAAVPAWVPCRRWGLAAVTFGFHHGLSTLLARKTERAPQWLRACRHK). Residues 78–177 (IIFIPGYISN…KVVALVGVAT (100 aa)) enclose the AB hydrolase-1 domain. Active-site charge relay system residues include S152, D249, and H279.

The protein belongs to the AB hydrolase superfamily.

The protein resides in the mitochondrion. The enzyme catalyses S-hexadecanoyl-L-cysteinyl-[protein] + H2O = L-cysteinyl-[protein] + hexadecanoate + H(+). It catalyses the reaction mycophenolic acid O-acyl-beta-D-glucuronide + H2O = mycophenolate + D-glucuronate + H(+). Inhibited by palmostatin-B. Its function is as follows. Acts as an acyl-protein thioesterase that hydrolyzes fatty acids from acylated residues in proteins. Regulates the mitochondrial S-depalmitoylation of the nucleophilic active site residue of peroxiredoxin-5/PRDX5, a key antioxidant protein, therefore modulating mitochondrial antioxidant ability. Also catalyzes the deglucuronidation of mycophenolic acid acyl-glucuronide, an active metabolite of the immunosuppressant drug mycophenolate. In Bos taurus (Bovine), this protein is Palmitoyl-protein thioesterase ABHD10, mitochondrial (ABHD10).